Here is a 3343-residue protein sequence, read N- to C-terminus: Breast cancer type 2 susceptibility protein homolog (3343 aa).

Residues 1–40 are interaction with PALB2; sequence MTVEYKRRPTFWEIFKARCSTADLGPISLNWFEELFSEAP. Residues 40-60 form a disordered region; the sequence is PPYNTEHPEESEYKPQGHEPQ. Basic and acidic residues predominate over residues 45–56; sequence EHPEESEYKPQG. Serine 70 bears the Phosphoserine mark. The disordered stretch occupies residues 348 to 381; it reads IEPRDSEPLDPSVTNQKPLYSQSGDISSEAGQCS. Residues 359–381 show a composition bias toward polar residues; sequence SVTNQKPLYSQSGDISSEAGQCS. Serine 475 and serine 736 each carry phosphoserine. The tract at residues 622–982 is interaction with NPM1; sequence PDSSIKRSNL…DKWSEFLDPL (361 aa). BRCA2 repeat units follow at residues 984–1018, 1197–1231, 1405–1439, 1503–1537, 1645–1669, 1828–1845, 1939–1973, and 2019–2053; these read NHKL…DIEE, KEME…DIEN, MKEF…QETE, KEPT…ETQY, CYTG…WLRE, FITT…IFTD, PSRT…EIDG, and SSFV…EFDL. The segment at 985-2050 is interaction with RAD51; it reads HKLGGSFRTA…LHKVKGMLEE (1066 aa). Disordered stretches follow at residues 2059-2138, 2297-2356, and 2377-2407; these read TLQH…VLGT, PFCS…SDKS, and DSKN…PQFN. A Phosphoserine modification is found at serine 2063. 2 stretches are compositionally biased toward polar residues: residues 2083-2094 and 2101-2125; these read PEYSVSSKLQKT and SPSN…QLSQ. The interval 2233 to 2300 is interaction with HSF2BP; it reads RKRGGMAGVA…EPVTCGPFCS (68 aa). Polar residues-rich tracts occupy residues 2307-2320 and 2332-2342; these read TQSP…QGLQ and GKSSSNPTVSA. The segment at 2313 to 2475 is interaction with FANCD2; it reads TSPAQGLQSK…SPKQLYMYGV (163 aa). A compositionally biased stretch (basic and acidic residues) spans 2344–2356; sequence RSERTRHSVSDKS. Residues 2411 to 2762 form an interaction with SEM1 region; sequence MSSLQNARDL…QRVYPLQWVE (352 aa). The Nuclear export signal; masked by interaction with SEM1 signature appears at 2612–2628; the sequence is AAKTLVLCVSDIISLST. The segment at 3114 to 3163 is disordered; that stretch reads DSPKWSTPNKDPTREPYPASTCSASDLASGGQLPRSSPTDQQSYRSPLSC. Polar residues predominate over residues 3147–3163; it reads PRSSPTDQQSYRSPLSC. A Phosphoserine; by CDK1 and CDK2 modification is found at serine 3222. Disordered regions lie at residues 3231–3255 and 3289–3343; these read PPRS…WSRA and VGGS…PDYS. Serine 3250 carries the phosphoserine modification. The span at 3295 to 3310 shows a compositional bias: polar residues; sequence VFPSDSTRTEGPSAST. The span at 3318-3334 shows a compositional bias: basic and acidic residues; it reads SKRESLRDCRDDSDGKL.

Monomer and dimer. Interacts with RAD51; regulates RAD51 recruitment and function at sites of DNA repair. Interacts with SEM1, WDR16, USP11, DMC1, ROCK2 and NPM1. Interacts with both nonubiquitinated and monoubiquitinated FANCD2; this complex also includes XRCC3 and phosphorylated FANCG. Part of a BRCA complex containing BRCA1, BRCA2 and PALB2. Component of the homologous recombination repair (HR) complex composed of ERCC5/XPG, BRCA2, PALB2, DSS1 and RAD51. Within the complex, interacts with ERCC5/XPG and PALB2. Interacts directly with PALB2 which may serve as a scaffold for a HR complex containing PALB2, BRCA2, RAD51C, RAD51 and XRCC3. Interacts with BRCA1 only in the presence of PALB2 which serves as the bridging protein. Interacts with POLH; the interaction is direct. Interacts with the TREX-2 complex subunits PCID2 and SEM1. Interacts with HSF2BP and BRME1; the interaction with HSF2BP is direct and allows the formation of a ternary complex. The complex BRME1:HSF2BP:BRCA2 interacts with SPATA22, MEIOB and RAD51. Post-translationally, phosphorylated by ATM upon irradiation-induced DNA damage. Phosphorylation by CHEK1 and CHEK2 regulates interaction with RAD51. Phosphorylation at Ser-3222 by CDK1 and CDK2 is low in S phase when recombination is active, but increases as cells progress towards mitosis; this phosphorylation prevents homologous recombination-dependent repair during S phase and G2 by inhibiting RAD51 binding. In terms of processing, ubiquitinated in the absence of DNA damage; this does not lead to proteasomal degradation. In contrast, ubiquitination in response to DNA damage leads to proteasomal degradation. Highest expression in testis. Also expressed in spleen, skeletal muscle, thymus, mammary gland, heart, ovary, prostate, liver, lung, kidney and brain.

Its subcellular location is the nucleus. It localises to the cytoplasm. The protein localises to the cytoskeleton. The protein resides in the microtubule organizing center. It is found in the centrosome. Functionally, involved in double-strand break repair and/or homologous recombination. Binds RAD51 and potentiates recombinational DNA repair by promoting assembly of RAD51 onto single-stranded DNA (ssDNA). Acts by targeting RAD51 to ssDNA over double-stranded DNA, enabling RAD51 to displace replication protein-A (RPA) from ssDNA and stabilizing RAD51-ssDNA filaments by blocking ATP hydrolysis. Part of a PALB2-scaffolded HR complex containing RAD51C and which is thought to play a role in DNA repair by HR. May participate in S phase checkpoint activation. Binds selectively to ssDNA, and to ssDNA in tailed duplexes and replication fork structures. May play a role in the extension step after strand invasion at replication-dependent DNA double-strand breaks; together with PALB2 is involved in both POLH localization at collapsed replication forks and DNA polymerization activity. In concert with NPM1, regulates centrosome duplication. Interacts with the TREX-2 complex (transcription and export complex 2) subunits PCID2 and SEM1, and is required to prevent R-loop-associated DNA damage and thus transcription-associated genomic instability, independently of its known role in homologous recombination. The protein is Breast cancer type 2 susceptibility protein homolog of Rattus norvegicus (Rat).